A 141-amino-acid chain; its full sequence is Nucleoside triphosphatase NudI (141 aa).

The 141-residue stretch at 1 to 141 (MRQRTIVCPL…RHTLALKGLL (141 aa)) folds into the Nudix hydrolase domain. The Nudix box signature appears at 38 to 59 (GGVEPGERIEEALRREIREELG).

This sequence belongs to the Nudix hydrolase family. NudI subfamily. As to quaternary structure, monomer. Mg(2+) serves as cofactor.

The enzyme catalyses a ribonucleoside 5'-triphosphate + H2O = a ribonucleoside 5'-phosphate + diphosphate + H(+). It carries out the reaction a 2'-deoxyribonucleoside 5'-triphosphate + H2O = a 2'-deoxyribonucleoside 5'-phosphate + diphosphate + H(+). It catalyses the reaction dUTP + H2O = dUMP + diphosphate + H(+). The catalysed reaction is dTTP + H2O = dTMP + diphosphate + H(+). The enzyme catalyses dCTP + H2O = dCMP + diphosphate + H(+). In terms of biological role, catalyzes the hydrolysis of nucleoside triphosphates, with a preference for pyrimidine deoxynucleoside triphosphates (dUTP, dTTP and dCTP). In Salmonella newport (strain SL254), this protein is Nucleoside triphosphatase NudI.